The following is a 130-amino-acid chain: Probable pilin MJ0835.1 (130 aa).

A propeptide spanning residues 1–14 is cleaved from the precursor; that stretch reads MNTMENKIIKSKKA. The QXSXEXXXL motif lies at 15–23; it reads QVSLEFSFL.

Post-translationally, the N-terminus is cleaved by the prepilin peptidase EppA, which recognizes the class III signal sequence.

Its subcellular location is the secreted. It localises to the cell surface. The protein localises to the fimbrium. The chain is Probable pilin MJ0835.1 from Methanocaldococcus jannaschii (strain ATCC 43067 / DSM 2661 / JAL-1 / JCM 10045 / NBRC 100440) (Methanococcus jannaschii).